A 206-amino-acid chain; its full sequence is Large ribosomal subunit protein uL4 (206 aa).

The protein belongs to the universal ribosomal protein uL4 family. In terms of assembly, part of the 50S ribosomal subunit.

One of the primary rRNA binding proteins, this protein initially binds near the 5'-end of the 23S rRNA. It is important during the early stages of 50S assembly. It makes multiple contacts with different domains of the 23S rRNA in the assembled 50S subunit and ribosome. Functionally, forms part of the polypeptide exit tunnel. The sequence is that of Large ribosomal subunit protein uL4 from Nitratidesulfovibrio vulgaris (strain ATCC 29579 / DSM 644 / CCUG 34227 / NCIMB 8303 / VKM B-1760 / Hildenborough) (Desulfovibrio vulgaris).